Reading from the N-terminus, the 556-residue chain is CDP-diacylglycerol--glycerol-3-phosphate 3-phosphatidyltransferase, mitochondrial (556 aa).

Residues 1–28 constitute a mitochondrion transit peptide; the sequence is MAAAAAAAAGPVFWRRLLGLLPGRPGLA. Phosphoserine is present on Ser-49. 124 to 131 serves as a coordination point for ATP; that stretch reads ASLYLGIG. PLD phosphodiesterase domains are found at residues 215-241 and 419-457; these read TIGLQHIKVYLFDNNVILSGANLSDSY and FGAKGVAGAIPAAYVHIERQFYSEVCSLGQQERVQLQEY. Residues His-220, Lys-222, and Asp-227 contribute to the active site.

Belongs to the CDP-alcohol phosphatidyltransferase class-II family.

The protein localises to the mitochondrion. The enzyme catalyses a CDP-1,2-diacyl-sn-glycerol + sn-glycerol 3-phosphate = a 1,2-diacyl-sn-glycero-3-phospho-(1'-sn-glycero-3'-phosphate) + CMP + H(+). Its pathway is phospholipid metabolism; phosphatidylglycerol biosynthesis; phosphatidylglycerol from CDP-diacylglycerol: step 1/2. Its activity is regulated as follows. Activated by calcium and magnesium and inhibited by other bivalent cations. Its function is as follows. Functions in the biosynthesis of the anionic phospholipids phosphatidylglycerol and cardiolipin. The protein is CDP-diacylglycerol--glycerol-3-phosphate 3-phosphatidyltransferase, mitochondrial (PGS1) of Bos taurus (Bovine).